We begin with the raw amino-acid sequence, 521 residues long: Zinc finger CCCH domain-containing protein 45 (521 aa).

Disordered stretches follow at residues 28–60, 142–185, and 296–319; these read TEDSPANVASQPQRHSYPSRKPRGPDLPPGFEG, TPAI…PLCS, and SRSFTNPERRVSPPKPVNGSISPP. Residues 34–43 show a composition bias toward polar residues; the sequence is NVASQPQRHS. Residues 159–168 show a composition bias toward low complexity; sequence EESSNSKVES. Positions 170-185 are enriched in polar residues; it reads VTANKQGQLETKPLCS. The C3H1-type zinc-finger motif lies at 469 to 497; sequence NKIHQQCIYFGTANGCNMGDSCTYVHDRY.

This is Zinc finger CCCH domain-containing protein 45 from Arabidopsis thaliana (Mouse-ear cress).